The following is a 36-amino-acid chain: Conotoxin Cl14.10 (36 aa).

Residues 1–2 constitute a propeptide that is removed on maturation; sequence NE.

Contains 2 disulfide bond. Expressed by the venom duct.

Its subcellular location is the secreted. The polypeptide is Conotoxin Cl14.10 (Californiconus californicus (California cone)).